Consider the following 156-residue polypeptide: 6,7-dimethyl-8-ribityllumazine synthase (156 aa).

5-amino-6-(D-ribitylamino)uracil-binding positions include F22, 57-59 (AYE), and 81-83 (TVI). 86-87 (GT) lines the (2S)-2-hydroxy-3-oxobutyl phosphate pocket. Catalysis depends on H89, which acts as the Proton donor. F114 is a binding site for 5-amino-6-(D-ribitylamino)uracil. (2S)-2-hydroxy-3-oxobutyl phosphate is bound at residue R128.

This sequence belongs to the DMRL synthase family. As to quaternary structure, forms an icosahedral capsid composed of 60 subunits, arranged as a dodecamer of pentamers.

It carries out the reaction (2S)-2-hydroxy-3-oxobutyl phosphate + 5-amino-6-(D-ribitylamino)uracil = 6,7-dimethyl-8-(1-D-ribityl)lumazine + phosphate + 2 H2O + H(+). Its pathway is cofactor biosynthesis; riboflavin biosynthesis; riboflavin from 2-hydroxy-3-oxobutyl phosphate and 5-amino-6-(D-ribitylamino)uracil: step 1/2. Catalyzes the formation of 6,7-dimethyl-8-ribityllumazine by condensation of 5-amino-6-(D-ribitylamino)uracil with 3,4-dihydroxy-2-butanone 4-phosphate. This is the penultimate step in the biosynthesis of riboflavin. This is 6,7-dimethyl-8-ribityllumazine synthase from Salmonella heidelberg (strain SL476).